Here is a 202-residue protein sequence, read N- to C-terminus: Superoxide dismutase [Mn] (202 aa).

Residue H27 coordinates Mn(2+). Phosphothreonine occurs at positions 34 and 70. Mn(2+)-binding residues include H82, D164, and H168.

Belongs to the iron/manganese superoxide dismutase family. As to quaternary structure, homodimer. The cofactor is Mn(2+).

It carries out the reaction 2 superoxide + 2 H(+) = H2O2 + O2. Functionally, destroys superoxide anion radicals which are normally produced within the cells and which are toxic to biological systems. This Halalkalibacterium halodurans (strain ATCC BAA-125 / DSM 18197 / FERM 7344 / JCM 9153 / C-125) (Bacillus halodurans) protein is Superoxide dismutase [Mn] (sodA).